Reading from the N-terminus, the 524-residue chain is Apoptosis inhibitor 5 (524 aa).

Residues 2–360 (PTVEELYRNY…HQLGRKLPDF (359 aa)) form an ARM-like and Heat-like helical repeats region. Residue Lys-251 is modified to N6-acetyllysine. A leucine-zipper region spans residues 370-391 (LKDFKIRLQYFARGLQVYIRQL). Phosphothreonine is present on Thr-399. The disordered stretch occupies residues 452–524 (GQKRASEDTT…RGNRSRGRLY (73 aa)). Residues 454–475 (KRASEDTTSGSPPKKSSAGPKR) carry the Nuclear localization signal motif. 3 positions are modified to phosphoserine: Ser-462, Ser-464, and Ser-469. Positions 462–472 (SGSPPKKSSAG) are enriched in low complexity. Over residues 487 to 497 (KYSSNLGNFNY) the composition is skewed to polar residues. Arg-500 bears the Omega-N-methylarginine mark.

The protein belongs to the API5 family. In terms of assembly, monomer. Interacts with FGF2 and ACIN1. In terms of processing, acetylation at Lys-251 impairs antiapoptotic function. As to expression, expressed in all tissues tested, including heart, brain, placenta, lung, liver, skeletal muscle, kidney and pancreas. Highest levels in heart, pancreas and placenta. Highly expressed in several cancers. Preferentially expressed in squamous cell carcinoma versus adenocarcinoma in non-small cell lung cancer.

Its subcellular location is the nucleus. It is found in the cytoplasm. In terms of biological role, antiapoptotic factor that may have a role in protein assembly. Negatively regulates ACIN1. By binding to ACIN1, it suppresses ACIN1 cleavage from CASP3 and ACIN1-mediated DNA fragmentation. Also known to efficiently suppress E2F1-induced apoptosis. Its depletion enhances the cytotoxic action of the chemotherapeutic drugs. The chain is Apoptosis inhibitor 5 from Homo sapiens (Human).